The following is a 302-amino-acid chain: Putative S-adenosyl-L-methionine-dependent methyltransferase MRA_0290 (302 aa).

Residues D126 and 155–156 (DL) each bind S-adenosyl-L-methionine.

It belongs to the UPF0677 family.

Functionally, exhibits S-adenosyl-L-methionine-dependent methyltransferase activity. This Mycobacterium tuberculosis (strain ATCC 25177 / H37Ra) protein is Putative S-adenosyl-L-methionine-dependent methyltransferase MRA_0290.